We begin with the raw amino-acid sequence, 265 residues long: Eukaryotic translation initiation factor 3 subunit J (265 aa).

Disordered regions lie at residues 1–113 and 215–237; these read MPPS…DSDL and SNEK…AAKT. Residues 27–45 show a composition bias toward acidic residues; it reads DEEDGDVLDSWDAADDSEV. A coiled-coil region spans residues 43–95; that stretch reads SEVEREKAAKAAEAKAKAEAEAAANKKSKAQRIAEHKTRRKAAEDEEDDESDE. Over residues 46–62 the composition is skewed to basic and acidic residues; sequence EREKAAKAAEAKAKAEA. Residues 86-97 show a composition bias toward acidic residues; the sequence is EDEEDDESDEDE. Basic and acidic residues-rich tracts occupy residues 98–113 and 217–229; these read AEKR…DSDL and EKMK…DKGS.

Belongs to the eIF-3 subunit J family. In terms of assembly, component of the eukaryotic translation initiation factor 3 (eIF-3) complex.

Its subcellular location is the cytoplasm. Component of the eukaryotic translation initiation factor 3 (eIF-3) complex, which is involved in protein synthesis of a specialized repertoire of mRNAs and, together with other initiation factors, stimulates binding of mRNA and methionyl-tRNAi to the 40S ribosome. The eIF-3 complex specifically targets and initiates translation of a subset of mRNAs involved in cell proliferation. The sequence is that of Eukaryotic translation initiation factor 3 subunit J (hcr1) from Emericella nidulans (strain FGSC A4 / ATCC 38163 / CBS 112.46 / NRRL 194 / M139) (Aspergillus nidulans).